The following is a 545-amino-acid chain: CTP synthase (545 aa).

The interval 1–266 is amidoligase domain; the sequence is MTTNYIFVTG…DDYICKRFSL (266 aa). S14 serves as a coordination point for CTP. S14 contributes to the UTP binding site. Residues 15-20 and D72 each bind ATP; that span reads SLGKGI. The Mg(2+) site is built by D72 and E140. Residues 147–149, 187–192, and K223 contribute to the CTP site; these read DIE and KTKPTQ. UTP is bound by residues 187–192 and K223; that span reads KTKPTQ. 239 to 241 lines the ATP pocket; that stretch reads KDV. The 252-residue stretch at 291–542 folds into the Glutamine amidotransferase type-1 domain; the sequence is TIGMVGKYIE…VKAANEHQKR (252 aa). G352 lines the L-glutamine pocket. C379 serves as the catalytic Nucleophile; for glutamine hydrolysis. L-glutamine contacts are provided by residues 380–383, E403, and R470; that span reads LGMQ. Active-site residues include H515 and E517.

It belongs to the CTP synthase family. Homotetramer.

It catalyses the reaction UTP + L-glutamine + ATP + H2O = CTP + L-glutamate + ADP + phosphate + 2 H(+). It carries out the reaction L-glutamine + H2O = L-glutamate + NH4(+). The enzyme catalyses UTP + NH4(+) + ATP = CTP + ADP + phosphate + 2 H(+). Its pathway is pyrimidine metabolism; CTP biosynthesis via de novo pathway; CTP from UDP: step 2/2. With respect to regulation, allosterically activated by GTP, when glutamine is the substrate; GTP has no effect on the reaction when ammonia is the substrate. The allosteric effector GTP functions by stabilizing the protein conformation that binds the tetrahedral intermediate(s) formed during glutamine hydrolysis. Inhibited by the product CTP, via allosteric rather than competitive inhibition. In terms of biological role, catalyzes the ATP-dependent amination of UTP to CTP with either L-glutamine or ammonia as the source of nitrogen. Regulates intracellular CTP levels through interactions with the four ribonucleotide triphosphates. The protein is CTP synthase of Salmonella newport (strain SL254).